We begin with the raw amino-acid sequence, 67 residues long: Large ribosomal subunit protein uL29 (67 aa).

It belongs to the universal ribosomal protein uL29 family.

The protein is Large ribosomal subunit protein uL29 of Ehrlichia canis (strain Jake).